A 92-amino-acid polypeptide reads, in one-letter code: Probable Fe(2+)-trafficking protein (92 aa).

Belongs to the Fe(2+)-trafficking protein family.

Its function is as follows. Could be a mediator in iron transactions between iron acquisition and iron-requiring processes, such as synthesis and/or repair of Fe-S clusters in biosynthetic enzymes. The sequence is that of Probable Fe(2+)-trafficking protein from Shewanella halifaxensis (strain HAW-EB4).